Consider the following 225-residue polypeptide: MTPRLRLQPESVGIGMTSQRVRDRLVERLREAGIHDEATLNAMQTVPRHLFIDEALASRAYEDTALPIGHGQTISQPWVVARMTEAVLQVTPTKVLEVGTGSGYQGAILAALGLEVYTVERIGDLLRQARKRFRHLGMNVRSKHDDGRIGWHEHGPYDAIVVTAAAPALVDALVDQLAVGGRLVAPVGGASSQSLVQLTRGADGTIEQQVLAPVTFVPLLSGMLD.

The active site involves serine 75.

The protein belongs to the methyltransferase superfamily. L-isoaspartyl/D-aspartyl protein methyltransferase family.

The protein resides in the cytoplasm. The catalysed reaction is [protein]-L-isoaspartate + S-adenosyl-L-methionine = [protein]-L-isoaspartate alpha-methyl ester + S-adenosyl-L-homocysteine. In terms of biological role, catalyzes the methyl esterification of L-isoaspartyl residues in peptides and proteins that result from spontaneous decomposition of normal L-aspartyl and L-asparaginyl residues. It plays a role in the repair and/or degradation of damaged proteins. In Xanthomonas oryzae pv. oryzae (strain PXO99A), this protein is Protein-L-isoaspartate O-methyltransferase.